The chain runs to 209 residues: ATP-dependent Clp protease proteolytic subunit (209 aa).

Residue Ser107 is the Nucleophile of the active site. His132 is a catalytic residue.

The protein belongs to the peptidase S14 family. In terms of assembly, fourteen ClpP subunits assemble into 2 heptameric rings which stack back to back to give a disk-like structure with a central cavity, resembling the structure of eukaryotic proteasomes.

The protein localises to the cytoplasm. The enzyme catalyses Hydrolysis of proteins to small peptides in the presence of ATP and magnesium. alpha-casein is the usual test substrate. In the absence of ATP, only oligopeptides shorter than five residues are hydrolyzed (such as succinyl-Leu-Tyr-|-NHMec, and Leu-Tyr-Leu-|-Tyr-Trp, in which cleavage of the -Tyr-|-Leu- and -Tyr-|-Trp bonds also occurs).. Cleaves peptides in various proteins in a process that requires ATP hydrolysis. Has a chymotrypsin-like activity. Plays a major role in the degradation of misfolded proteins. The chain is ATP-dependent Clp protease proteolytic subunit from Methylobacterium nodulans (strain LMG 21967 / CNCM I-2342 / ORS 2060).